The primary structure comprises 501 residues: Ell-associated factor Eaf (501 aa).

Polar residues-rich tracts occupy residues 138-149 (NMGQGQLHSQGA) and 173-192 (ENST…SRRN). Disordered regions lie at residues 138 to 226 (NMGQ…PAWD) and 256 to 501 (GHAN…DDDD). Composition is skewed to low complexity over residues 200 to 221 (RNSP…SPQS) and 256 to 270 (GHAN…SATG). A Phosphoserine modification is found at serine 202. Polar residues predominate over residues 271 to 283 (QTDFGSISSSSHI). 2 stretches are compositionally biased toward low complexity: residues 302–314 (QRQS…QQQP) and 329–343 (QQQR…QRPP). Residues 393 to 408 (DSSDSDSGSDSDDSTE) show a composition bias toward acidic residues. Composition is skewed to low complexity over residues 416 to 437 (QQPV…HLNQ), 455 to 471 (QQQQ…QKQQ), and 483 to 501 (NDLL…DDDD).

This sequence belongs to the EAF family.

It localises to the nucleus. In terms of biological role, promotes transcriptional elongation by Su(Tpl)/ELL. Essential for development. The chain is Ell-associated factor Eaf from Drosophila yakuba (Fruit fly).